The following is a 111-amino-acid chain: 2Fe-2S ferredoxin (111 aa).

The 2Fe-2S ferredoxin-type domain maps to 1–104; that stretch reads MPKVLFLPHK…DIEVEIPLYN (104 aa). Positions 42, 48, 51, and 87 each coordinate [2Fe-2S] cluster.

It belongs to the adrenodoxin/putidaredoxin family. [2Fe-2S] cluster is required as a cofactor.

In terms of biological role, ferredoxin are iron-sulfur proteins that transfer electrons in a wide variety of metabolic reactions. The protein is 2Fe-2S ferredoxin (fdx) of Buchnera aphidicola subsp. Acyrthosiphon pisum (strain APS) (Acyrthosiphon pisum symbiotic bacterium).